Here is a 217-residue protein sequence, read N- to C-terminus: Small ribosomal subunit protein uS3 (217 aa).

The KH type-2 domain occupies 38-106; it reads IRQLIQTKLA…QVHINIVEIK (69 aa).

Belongs to the universal ribosomal protein uS3 family. Part of the 30S ribosomal subunit. Forms a tight complex with proteins S10 and S14.

Its function is as follows. Binds the lower part of the 30S subunit head. Binds mRNA in the 70S ribosome, positioning it for translation. The sequence is that of Small ribosomal subunit protein uS3 from Lactococcus lactis subsp. cremoris (strain MG1363).